Here is a 428-residue protein sequence, read N- to C-terminus: Keratin, type I cytoskeletal 18-A (428 aa).

The tract at residues Ser-2–Asn-78 is head. Residues Ser-24–Gly-45 are disordered. The interval Glu-79–His-114 is coil 1A. An IF rod domain is found at Glu-79–Leu-389. Residues Thr-115–Thr-130 are linker 1. The tract at residues Ile-131 to Leu-222 is coil 1B. A linker 12 region spans residues Gln-223–Ile-246. Positions Met-247–Gly-384 are coil 2. The interval Asp-385–Ser-428 is tail.

The protein belongs to the intermediate filament family. In terms of assembly, heterotetramer of two type I and two type II keratins. Keratin-18 associates with keratin-8. Proteolytically cleaved by caspases during epithelial cell apoptosis. Expressed at high levels in notochord and low levels in adult liver.

Its function is as follows. When phosphorylated, plays a role in filament reorganization. In Xenopus laevis (African clawed frog), this protein is Keratin, type I cytoskeletal 18-A (krt18-a).